A 309-amino-acid chain; its full sequence is Flavonol sulfotransferase-like (309 aa).

59-64 (KTGTTW) serves as a coordination point for 3'-phosphoadenylyl sulfate. His119 acts as the Proton acceptor in catalysis. Residues Arg141, Ser149, Tyr207, and 274–276 (RKG) each bind 3'-phosphoadenylyl sulfate.

This sequence belongs to the sulfotransferase 1 family.

The protein resides in the cytoplasm. In Flaveria bidentis (Coastal plain yellowtops), this protein is Flavonol sulfotransferase-like.